The sequence spans 222 residues: 7-cyano-7-deazaguanine synthase (222 aa).

8–18 (LSGGLDSTTCL) serves as a coordination point for ATP. Zn(2+) contacts are provided by Cys186, Cys194, Cys197, and Cys200.

It belongs to the QueC family. In terms of assembly, homodimer. Requires Zn(2+) as cofactor.

The enzyme catalyses 7-carboxy-7-deazaguanine + NH4(+) + ATP = 7-cyano-7-deazaguanine + ADP + phosphate + H2O + H(+). Its pathway is purine metabolism; 7-cyano-7-deazaguanine biosynthesis. Its function is as follows. Catalyzes the ATP-dependent conversion of 7-carboxy-7-deazaguanine (CDG) to 7-cyano-7-deazaguanine (preQ(0)). In Acetivibrio thermocellus (strain ATCC 27405 / DSM 1237 / JCM 9322 / NBRC 103400 / NCIMB 10682 / NRRL B-4536 / VPI 7372) (Clostridium thermocellum), this protein is 7-cyano-7-deazaguanine synthase.